Here is a 130-residue protein sequence, read N- to C-terminus: Small ribosomal subunit protein uS11 (130 aa).

Belongs to the universal ribosomal protein uS11 family. As to quaternary structure, part of the 30S ribosomal subunit. Interacts with proteins S7 and S18. Binds to IF-3.

Its function is as follows. Located on the platform of the 30S subunit, it bridges several disparate RNA helices of the 16S rRNA. Forms part of the Shine-Dalgarno cleft in the 70S ribosome. The protein is Small ribosomal subunit protein uS11 of Prochlorococcus marinus (strain MIT 9313).